A 300-amino-acid chain; its full sequence is Cis-3-alkyl-4-alkyloxetan-2-one decarboxylase (300 aa).

An AB hydrolase-1 domain is found at 33–282 (VVVMLHGNPS…DDANHYVLED (250 aa)).

Belongs to the AB hydrolase superfamily. In terms of assembly, homotetramer. Forms a complex with OleC and OleD.

The protein localises to the cytoplasm. It catalyses the reaction a cis-3-alkyl-4-alkyloxetan-2-one = a cis-alkene + CO2. Functionally, involved in olefin biosynthesis. Catalyzes the elimination of carbon dioxide from beta-lactones to form the final olefin product. The protein is Cis-3-alkyl-4-alkyloxetan-2-one decarboxylase of Xanthomonas campestris pv. campestris (strain ATCC 33913 / DSM 3586 / NCPPB 528 / LMG 568 / P 25).